The following is a 187-amino-acid chain: Potassium-transporting ATPase KdpC subunit (187 aa).

Residues 11–31 traverse the membrane as a helical segment; the sequence is LILLMTVVTGALYPLAVTGIA.

It belongs to the KdpC family. In terms of assembly, the system is composed of three essential subunits: KdpA, KdpB and KdpC.

It localises to the cell inner membrane. In terms of biological role, part of the high-affinity ATP-driven potassium transport (or Kdp) system, which catalyzes the hydrolysis of ATP coupled with the electrogenic transport of potassium into the cytoplasm. This subunit acts as a catalytic chaperone that increases the ATP-binding affinity of the ATP-hydrolyzing subunit KdpB by the formation of a transient KdpB/KdpC/ATP ternary complex. This is Potassium-transporting ATPase KdpC subunit from Pseudomonas entomophila (strain L48).